The primary structure comprises 220 residues: Coat protein TP4 (220 aa).

It localises to the virion. The chain is Coat protein TP4 from Thermoproteus tenax (TTV1).